The following is a 543-amino-acid chain: Neurofilament light polypeptide (543 aa).

Residue serine 2 is modified to N-acetylserine. The head stretch occupies residues serine 2–alanine 92. Residue threonine 21 is glycosylated (O-linked (GlcNAc) threonine). An Asymmetric dimethylarginine; alternate modification is found at arginine 23. Arginine 23 carries the post-translational modification Omega-N-methylarginine; alternate. Residue serine 27 is glycosylated (O-linked (GlcNAc) serine). Arginine 30 carries the post-translational modification Omega-N-methylarginine. The residue at position 43 (tyrosine 43) is a Phosphotyrosine. Phosphoserine occurs at positions 56, 67, and 103. The IF rod domain occupies glutamate 90–leucine 400. A coil 1A region spans residues glutamine 93–valine 124. A linker 1 region spans residues leucine 125–alanine 137. The interval leucine 138 to leucine 234 is coil 1B. The segment at glutamine 235–proline 252 is linker 12. The coil 2A stretch occupies residues aspartate 253–lysine 271. The segment at asparagine 272–phenylalanine 280 is linker 2. The tract at residues lysine 281–glutamate 396 is coil 2B. The epitope; recognized by IF-specific monoclonal antibody stretch occupies residues alanine 381–lysine 391. Residues glutamate 397–tyrosine 443 form a tail, subdomain A region. The tail stretch occupies residues glutamate 397–aspartate 543. The tail, subdomain B (acidic) stretch occupies residues threonine 444 to aspartate 543. The segment at lysine 462–aspartate 543 is disordered. A compositionally biased stretch (acidic residues) spans proline 471–glutamate 525. Phosphoserine is present on residues serine 472 and serine 502. Threonine 520 is modified (phosphothreonine). Residues glutamate 526–aspartate 543 are compositionally biased toward basic and acidic residues.

The protein belongs to the intermediate filament family. As to quaternary structure, forms homodimers (in vitro). Forms heterodimers with NEFH or NEFM; which can further hetero-oligomerize (in vitro). Forms heterodimers with INA (in vitro). Interacts with ARHGEF28. Interacts with TRIM2. O-glycosylated. In terms of processing, phosphorylated in the head and rod regions by the PKC kinase PKN1, leading to the inhibition of polymerization. Post-translationally, ubiquitinated in the presence of TRIM2 and UBE2D1.

Its subcellular location is the cell projection. The protein resides in the axon. It localises to the cytoplasm. It is found in the cytoskeleton. Its function is as follows. Neurofilaments usually contain three intermediate filament proteins: NEFL, NEFM, and NEFH which are involved in the maintenance of neuronal caliber. May additionally cooperate with the neuronal intermediate filament proteins PRPH and INA to form neuronal filamentous networks. This chain is Neurofilament light polypeptide (NEFL), found in Homo sapiens (Human).